We begin with the raw amino-acid sequence, 151 residues long: UPF0178 protein Sde_3033 (151 aa).

This sequence belongs to the UPF0178 family.

This is UPF0178 protein Sde_3033 from Saccharophagus degradans (strain 2-40 / ATCC 43961 / DSM 17024).